The chain runs to 799 residues: Ribosome biogenesis protein BOP1 homolog (799 aa).

The disordered stretch occupies residues 1-171 (MPRRVRAQKR…DDTSDEEHSL (171 aa)). Acidic residues predominate over residues 58–69 (SESDVTDDEQID). The segment covering 70-81 (EEARQADRDLLK) has biased composition (basic and acidic residues). Over residues 93–121 (DPSDADNDDDDDEEEAASDDDDEEEDAEP) the composition is skewed to acidic residues. Positions 122–132 (SSDSSNEASDA) are enriched in low complexity. WD repeat units follow at residues 457–498 (GHKA…RVVT), 500–538 (DAEVNMVAWCPNAGVSIVAVAHGHTVSLICPRVATAAID), 584–626 (PHHA…TQHP), 629–669 (KRNR…KKLL), 670–709 (TGVRWLSSLAIHPAGDNLIIGSYDKRLCWFDMDLSIKPYK), 713–752 (YHKYALRQVCFHKKYPIFASCGDDGNVHVLHGMVYNDLGQ), and 769–799 (SDGMGVMDCTFHPSQPWLFSAGSDGSIKLHV).

This sequence belongs to the WD repeat BOP1/ERB1 family.

It localises to the nucleus. Its subcellular location is the nucleolus. It is found in the nucleoplasm. In terms of biological role, required for maturation of ribosomal RNAs and formation of the large ribosomal subunit. The sequence is that of Ribosome biogenesis protein BOP1 homolog from Monosiga brevicollis (Choanoflagellate).